We begin with the raw amino-acid sequence, 484 residues long: UDP-N-acetylmuramoyl-L-alanyl-D-glutamate--2,6-diaminopimelate ligase (484 aa).

Serine 30 provides a ligand contact to UDP-N-acetyl-alpha-D-muramoyl-L-alanyl-D-glutamate. 111–117 (GTNGKTT) contacts ATP. Residues 153-154 (TT), serine 180, glutamine 186, and arginine 188 each bind UDP-N-acetyl-alpha-D-muramoyl-L-alanyl-D-glutamate. Lysine 220 is modified (N6-carboxylysine). Meso-2,6-diaminopimelate is bound by residues arginine 378, 402-405 (DNPR), glycine 455, and glutamate 459. A Meso-diaminopimelate recognition motif motif is present at residues 402-405 (DNPR).

The protein belongs to the MurCDEF family. MurE subfamily. Requires Mg(2+) as cofactor. Post-translationally, carboxylation is probably crucial for Mg(2+) binding and, consequently, for the gamma-phosphate positioning of ATP.

It is found in the cytoplasm. It catalyses the reaction UDP-N-acetyl-alpha-D-muramoyl-L-alanyl-D-glutamate + meso-2,6-diaminopimelate + ATP = UDP-N-acetyl-alpha-D-muramoyl-L-alanyl-gamma-D-glutamyl-meso-2,6-diaminopimelate + ADP + phosphate + H(+). Its pathway is cell wall biogenesis; peptidoglycan biosynthesis. Catalyzes the addition of meso-diaminopimelic acid to the nucleotide precursor UDP-N-acetylmuramoyl-L-alanyl-D-glutamate (UMAG) in the biosynthesis of bacterial cell-wall peptidoglycan. The polypeptide is UDP-N-acetylmuramoyl-L-alanyl-D-glutamate--2,6-diaminopimelate ligase (Phocaeicola vulgatus (strain ATCC 8482 / DSM 1447 / JCM 5826 / CCUG 4940 / NBRC 14291 / NCTC 11154) (Bacteroides vulgatus)).